An 894-amino-acid polypeptide reads, in one-letter code: Microsomal triglyceride transfer protein large subunit (894 aa).

An N-terminal signal peptide occupies residues 1–18; sequence MILLAVLFLCFISSYSAS. In terms of domain architecture, Vitellogenin spans 28–662; the sequence is LNNDRLYKLK…YVGKTPLHAI (635 aa). The cysteines at positions 174 and 194 are disulfide-linked.

In terms of assembly, heterodimer; heterodimerizes with the protein disulfide isomerase (P4HB/PDI). Interacts with APOB. Interacts with PRAP1.

The protein resides in the endoplasmic reticulum. It localises to the golgi apparatus. The enzyme catalyses a 1,2-diacyl-sn-glycero-3-phosphocholine(in) = a 1,2-diacyl-sn-glycero-3-phosphocholine(out). It carries out the reaction a 1,2-diacyl-sn-glycero-3-phosphoethanolamine(in) = a 1,2-diacyl-sn-glycero-3-phosphoethanolamine(out). The catalysed reaction is a cholesterol ester(in) = a cholesterol ester(out). It catalyses the reaction a triacyl-sn-glycerol(in) = a triacyl-sn-glycerol(out). Its function is as follows. Catalyzes the transport of triglyceride, cholesteryl ester, and phospholipid between phospholipid surfaces. Required for the assembly and secretion of plasma lipoproteins that contain apolipoprotein B. May be involved in regulating cholesteryl ester biosynthesis in cells that produce lipoproteins. The sequence is that of Microsomal triglyceride transfer protein large subunit (MTTP) from Sus scrofa (Pig).